Consider the following 409-residue polypeptide: Failed axon connections homolog (409 aa).

The helical transmembrane segment at 68 to 88 threads the bilayer; the sequence is YLTGGALLAAAAYLLHELLVI. The disordered stretch occupies residues 372 to 409; that stretch reads DEGAENSFSRTPDTDFTGHSLFDSDVDMDDYTDHEQCK.

The protein belongs to the FAX family.

It is found in the membrane. Functionally, may play a role in axonal development. This Homo sapiens (Human) protein is Failed axon connections homolog (FAXC).